We begin with the raw amino-acid sequence, 478 residues long: Uronate isomerase (478 aa).

This sequence belongs to the metallo-dependent hydrolases superfamily. Uronate isomerase family.

The enzyme catalyses D-glucuronate = D-fructuronate. The catalysed reaction is aldehydo-D-galacturonate = keto-D-tagaturonate. It functions in the pathway carbohydrate metabolism; pentose and glucuronate interconversion. This Bacillus pumilus (strain SAFR-032) protein is Uronate isomerase.